Here is a 268-residue protein sequence, read N- to C-terminus: Glucosamine-6-phosphate deaminase (268 aa).

The active-site Proton acceptor; for enolization step is the Asp-67. The active-site For ring-opening step is Asn-137. The active-site Proton acceptor; for ring-opening step is His-139. The active-site For ring-opening step is Glu-144.

Belongs to the glucosamine/galactosamine-6-phosphate isomerase family. NagB subfamily. In terms of assembly, homohexamer.

The enzyme catalyses alpha-D-glucosamine 6-phosphate + H2O = beta-D-fructose 6-phosphate + NH4(+). Its pathway is amino-sugar metabolism; N-acetylneuraminate degradation; D-fructose 6-phosphate from N-acetylneuraminate: step 5/5. Functionally, catalyzes the reversible isomerization-deamination of glucosamine 6-phosphate (GlcN6P) to form fructose 6-phosphate (Fru6P) and ammonium ion. The sequence is that of Glucosamine-6-phosphate deaminase from Colwellia psychrerythraea (strain 34H / ATCC BAA-681) (Vibrio psychroerythus).